Reading from the N-terminus, the 97-residue chain is Small ribosomal subunit protein bS20 (97 aa).

The protein belongs to the bacterial ribosomal protein bS20 family.

Its function is as follows. Binds directly to 16S ribosomal RNA. The sequence is that of Small ribosomal subunit protein bS20 from Prochlorococcus marinus (strain MIT 9515).